A 244-amino-acid chain; its full sequence is Capsid protein (244 aa).

Positions 1-24 (MSTSKRKRADEVQWNKRSTKKKAS) match the Bipartite nuclear localization signal motif. The segment at 1–38 (MSTSKRKRADEVQWNKRSTKKKASAPPVKKTGGKADRP) is disordered.

This sequence belongs to the geminiviridae capsid protein family. Homomultimer. Interacts with the movement protein. Binds to single-stranded and double-stranded viral DNA.

The protein localises to the virion. It is found in the host nucleus. In terms of biological role, encapsidates the viral genome into characteristic twinned ('geminate') particles. Binds the genomic viral ssDNA and shuttles it into and out of the cell nucleus. Plays a role in protection of the genome from degradation, virus acquisition and transmission by insect vectors, infectivity, and systemic movement. The CP of monopartite geminiviruses is absolutely essential for virus movement. The sequence is that of Capsid protein from Maize streak virus genotype E (isolate Pat) (MSV).